A 352-amino-acid polypeptide reads, in one-letter code: Cyclin-O (352 aa).

Residues 1–40 (MVTPCPASPGSPAAGAGRRDSHQNLRAPVKKSRRPCLRRK) form a disordered region. Over residues 28–40 (PVKKSRRPCLRRK) the composition is skewed to basic residues. A Phosphoserine modification is found at S83.

The protein belongs to the cyclin family. In terms of tissue distribution, present in respiratory cells (at protein level). Expressed in multiciliated tissue in brain and fallopian tube (at protein level). Highly expressed in oocytes.

Its subcellular location is the cytoplasm. It is found in the nucleus. It localises to the nucleolus. Specifically required for generation of multiciliated cells, possibly by promoting a cell cycle state compatible with centriole amplification and maturation. Acts downstream of MCIDAS to promote mother centriole amplification and maturation in preparation for apical docking. May be involved in apoptosis in lymphoid cells; however, this result requires additional evidences in vivo. May be involved in oocyte meiotic resumption in oocytes. The protein is Cyclin-O of Mus musculus (Mouse).